Consider the following 100-residue polypeptide: Small ribosomal subunit protein bS18c (100 aa).

The span at 1–19 (MDKSKRPFRKSKRSFRRRL) shows a compositional bias: basic residues. The interval 1-23 (MDKSKRPFRKSKRSFRRRLPPIG) is disordered.

This sequence belongs to the bacterial ribosomal protein bS18 family. Part of the 30S ribosomal subunit.

It localises to the plastid. The protein resides in the chloroplast. In Calycanthus floridus var. glaucus (Eastern sweetshrub), this protein is Small ribosomal subunit protein bS18c.